The following is a 396-amino-acid chain: MAGSSLRQVAVFGATGSIGASALDVIARHPERLRASVLSAGSKVEDLLALCAAHQPAHALIADAALYPALRDGLRALGLATQAHAGAEALDALAGSDACDTVVAAIVGAAGLPSTLAAARAGKRLLLANKESLVLAGELLTRTATAAGAEIIPIDSEHSAIFQCLRSCDAGRGVRRVILTASGGPFRGRDRAGLAAVTPAQAVAHPKWSMGPKISVDSATLMNKGLEVIEAHHLFGLPGEQIDVLVHPQSLVHSLVEFVDGSTLAQLGLPDMRTTLAVGLAWPERVESGVGGLDLLSQGRLDFEAPDTAAFPCLRLAWDALRAGGTAPAILNAANEVAVSAFLQGQVGFLAIPALVEHALTTLPRHNADTLDTLLFADAQARQITERALAHHALHA.

T15, G16, S17, I18, G41, and N129 together coordinate NADPH. K130 serves as a coordination point for 1-deoxy-D-xylulose 5-phosphate. Residue E131 coordinates NADPH. D155 provides a ligand contact to Mn(2+). Residues S156, E157, S182, and H205 each coordinate 1-deoxy-D-xylulose 5-phosphate. E157 contacts Mn(2+). Position 211 (G211) interacts with NADPH. The 1-deoxy-D-xylulose 5-phosphate site is built by S218, N223, K224, and E227. Position 227 (E227) interacts with Mn(2+).

It belongs to the DXR family. Requires Mg(2+) as cofactor. Mn(2+) serves as cofactor.

It catalyses the reaction 2-C-methyl-D-erythritol 4-phosphate + NADP(+) = 1-deoxy-D-xylulose 5-phosphate + NADPH + H(+). It participates in isoprenoid biosynthesis; isopentenyl diphosphate biosynthesis via DXP pathway; isopentenyl diphosphate from 1-deoxy-D-xylulose 5-phosphate: step 1/6. Functionally, catalyzes the NADPH-dependent rearrangement and reduction of 1-deoxy-D-xylulose-5-phosphate (DXP) to 2-C-methyl-D-erythritol 4-phosphate (MEP). In Xanthomonas oryzae pv. oryzae (strain MAFF 311018), this protein is 1-deoxy-D-xylulose 5-phosphate reductoisomerase.